The primary structure comprises 201 residues: FMN-dependent NADH:quinone oxidoreductase (201 aa).

Residues serine 9 and serine 16–serine 18 each bind FMN.

This sequence belongs to the azoreductase type 1 family. In terms of assembly, homodimer. It depends on FMN as a cofactor.

It carries out the reaction 2 a quinone + NADH + H(+) = 2 a 1,4-benzosemiquinone + NAD(+). The catalysed reaction is N,N-dimethyl-1,4-phenylenediamine + anthranilate + 2 NAD(+) = 2-(4-dimethylaminophenyl)diazenylbenzoate + 2 NADH + 2 H(+). In terms of biological role, quinone reductase that provides resistance to thiol-specific stress caused by electrophilic quinones. Its function is as follows. Also exhibits azoreductase activity. Catalyzes the reductive cleavage of the azo bond in aromatic azo compounds to the corresponding amines. In Mesomycoplasma hyopneumoniae (strain J / ATCC 25934 / NCTC 10110) (Mycoplasma hyopneumoniae), this protein is FMN-dependent NADH:quinone oxidoreductase.